Reading from the N-terminus, the 228-residue chain is Protein Thf1 (228 aa).

A coiled-coil region spans residues 201–223 (IKRSKEVVDELSQTERRKREERA). Positions 209 to 228 (DELSQTERRKREERAVSQPG) are disordered.

This sequence belongs to the THF1 family.

Its function is as follows. May be involved in photosynthetic membrane biogenesis. The protein is Protein Thf1 of Gloeobacter violaceus (strain ATCC 29082 / PCC 7421).